The sequence spans 56 residues: Large ribosomal subunit protein bL32 (56 aa).

The disordered stretch occupies residues 1 to 38 (MAVQQNKKSRSKRGMRRSHDSLSTAQLSVDATSGELHR). Residues 7-16 (KKSRSKRGMR) show a composition bias toward basic residues. Polar residues predominate over residues 21 to 31 (SLSTAQLSVDA).

The protein belongs to the bacterial ribosomal protein bL32 family.

In Shewanella woodyi (strain ATCC 51908 / MS32), this protein is Large ribosomal subunit protein bL32.